A 243-amino-acid polypeptide reads, in one-letter code: Small ribosomal subunit protein uS3 (243 aa).

Positions leucine 22–alanine 93 constitute a KH type-2 domain. Residues glutamine 195–alanine 243 are disordered.

The protein belongs to the universal ribosomal protein uS3 family.

This Manduca sexta (Tobacco hawkmoth) protein is Small ribosomal subunit protein uS3 (RpS3).